The primary structure comprises 759 residues: DNA topoisomerase 3 (759 aa).

Positions 3 to 147 (RALFVAEKND…RLDIFRARFS (145 aa)) constitute a Toprim domain. Residues 165-590 (DEKTVAAVDC…EQIGKYRAIF (426 aa)) enclose the Topo IA-type catalytic domain. Tyrosine 334 functions as the O-(5'-phospho-DNA)-tyrosine intermediate in the catalytic mechanism. The disordered stretch occupies residues 609-715 (DKNNQAGGGP…KEQEEEEEVF (107 aa)). Residues 614–639 (AGGGPGGPGGGGGPPRGPGGGGGGGP) show a composition bias toward gly residues. The segment covering 640 to 649 (TGPPAPPKPP) has biased composition (pro residues). 4 residues coordinate Zn(2+): cysteine 716, cysteine 718, cysteine 743, and cysteine 753. Residues 716–759 (CQCPEPMRAVTKVVQKEGPNKGKKFYTCSLPYTSSEKCNFFKWA) form a GRF-type zinc finger.

It belongs to the type IA topoisomerase family. As to quaternary structure, component of the BTR double Holliday Junction dissolution complex composed of at least him-6, top-3, rmh-1 and rmif-2, which is involved in double strand break repair in the germline. May interact with rmh-1.

It is found in the nucleus. It carries out the reaction ATP-independent breakage of single-stranded DNA, followed by passage and rejoining.. Functionally, component of the BTR double Holliday Junction dissolution complex, which is involved in homologous recombination during meiotic double strand break in the germline. Releases the supercoiling and torsional tension of DNA introduced during the DNA replication and transcription by transiently cleaving and rejoining one strand of the DNA duplex. Introduces a single-strand break via transesterification at a target site in duplex DNA. The scissile phosphodiester is attacked by the catalytic tyrosine of the enzyme, resulting in the formation of a DNA-(5'-phosphotyrosyl)-enzyme intermediate and the expulsion of a 3'-OH DNA strand. The free DNA strand than undergoes passage around the unbroken strand thus removing DNA supercoils. Finally, in the religation step, the DNA 3'-OH attacks the covalent intermediate to expel the active-site tyrosine and restore the DNA phosphodiester backbone. The protein is DNA topoisomerase 3 of Caenorhabditis elegans.